A 114-amino-acid chain; its full sequence is Large ribosomal subunit protein uL22 (114 aa).

This sequence belongs to the universal ribosomal protein uL22 family. In terms of assembly, part of the 50S ribosomal subunit.

Its function is as follows. This protein binds specifically to 23S rRNA; its binding is stimulated by other ribosomal proteins, e.g. L4, L17, and L20. It is important during the early stages of 50S assembly. It makes multiple contacts with different domains of the 23S rRNA in the assembled 50S subunit and ribosome. Functionally, the globular domain of the protein is located near the polypeptide exit tunnel on the outside of the subunit, while an extended beta-hairpin is found that lines the wall of the exit tunnel in the center of the 70S ribosome. The protein is Large ribosomal subunit protein uL22 of Streptococcus pyogenes serotype M5 (strain Manfredo).